The sequence spans 850 residues: Trimethylamine-N-oxide reductase (850 aa).

Residues 1-39 (MKNKDSLHVSRRRFLAQLGGLTVAGMLGPSLLTPRSARA) constitute a signal peptide (tat-type signal). Ser-191 contributes to the Mo-bis(molybdopterin guanine dinucleotide) binding site.

It belongs to the prokaryotic molybdopterin-containing oxidoreductase family. Mo-bis(molybdopterin guanine dinucleotide) serves as cofactor. In terms of processing, predicted to be exported by the Tat system. The position of the signal peptide cleavage has not been experimentally proven.

The protein resides in the periplasm. It carries out the reaction trimethylamine + 2 Fe(III)-[cytochrome c] + H2O = trimethylamine N-oxide + 2 Fe(II)-[cytochrome c] + 3 H(+). In terms of biological role, reduces trimethylamine-N-oxide (TMAO) into trimethylamine; an anaerobic reaction coupled to energy-yielding reactions. The protein is Trimethylamine-N-oxide reductase (torA) of Salmonella typhi.